We begin with the raw amino-acid sequence, 163 residues long: Succinate dehydrogenase assembly factor 2-A, mitochondrial (163 aa).

The transit peptide at Met1–Met23 directs the protein to the mitochondrion.

This sequence belongs to the SDHAF2 family. Interacts with the flavoprotein subunit within the SDH catalytic dimer.

It is found in the mitochondrion matrix. Functionally, plays an essential role in the assembly of succinate dehydrogenase (SDH), an enzyme complex (also referred to as respiratory complex II) that is a component of both the tricarboxylic acid (TCA) cycle and the mitochondrial electron transport chain, and which couples the oxidation of succinate to fumarate with the reduction of ubiquinone (coenzyme Q) to ubiquinol. Required for flavinylation (covalent attachment of FAD) of the flavoprotein subunit of the SDH catalytic dimer. This chain is Succinate dehydrogenase assembly factor 2-A, mitochondrial, found in Drosophila sechellia (Fruit fly).